A 118-amino-acid polypeptide reads, in one-letter code: Large ribosomal subunit protein bL20 (118 aa).

The protein belongs to the bacterial ribosomal protein bL20 family.

Its function is as follows. Binds directly to 23S ribosomal RNA and is necessary for the in vitro assembly process of the 50S ribosomal subunit. It is not involved in the protein synthesizing functions of that subunit. This chain is Large ribosomal subunit protein bL20, found in Syntrophotalea carbinolica (strain DSM 2380 / NBRC 103641 / GraBd1) (Pelobacter carbinolicus).